Here is a 138-residue protein sequence, read N- to C-terminus: Basic phospholipase A2 homolog Ts-K49a (138 aa).

Residues 1–16 form the signal peptide; the sequence is MRTLWIMAVLLLGVEG. Disulfide bonds link C42/C131, C44/C60, C59/C111, C65/C138, C66/C104, C73/C97, and C91/C102. The interval 121–133 is important for membrane-damaging activities in eukaryotes and bacteria; heparin-binding; sequence KKKKINLKLFCKK.

Expressed by the venom gland.

The protein resides in the secreted. Its function is as follows. Snake venom phospholipase A2 homolog that lacks catalytic activity. It shows myotoxic and weak anticoagulant activities and induces local edema a few hours after injection (5-10 ug) in the hind paw. A model of myotoxic mechanism has been proposed: an apo Lys49-PLA2 is activated by the entrance of a hydrophobic molecule (e.g. fatty acid) at the hydrophobic channel of the protein leading to a reorientation of a monomer. This reorientation causes a transition between 'inactive' to 'active' states, causing alignment of C-terminal and membrane-docking sites (MDoS) side-by-side and putting the membrane-disruption sites (MDiS) in the same plane, exposed to solvent and in a symmetric position for both monomers. The MDoS region stabilizes the toxin on membrane by the interaction of charged residues with phospholipid head groups. Subsequently, the MDiS region destabilizes the membrane with penetration of hydrophobic residues. This insertion causes a disorganization of the membrane, allowing an uncontrolled influx of ions (i.e. calcium and sodium), and eventually triggering irreversible intracellular alterations and cell death. This Trimeresurus stejnegeri (Chinese green tree viper) protein is Basic phospholipase A2 homolog Ts-K49a.